The primary structure comprises 711 residues: C6 finger domain transcription factor nscR (711 aa).

The zn(2)-C6 fungal-type DNA-binding region spans 17 to 43 (CELCRERKVKCDKLDPCTNCSSAGVIC). Residues 372–394 (SPPKHINDSDFDPTTSHDVPDRE) are disordered.

Its subcellular location is the nucleus. In terms of biological role, transcription factor that specifically regulates the neosartoricin B biosynthesis gene cluster. The sequence is that of C6 finger domain transcription factor nscR from Trichophyton tonsurans (strain CBS 112818) (Scalp ringworm fungus).